The following is a 187-amino-acid chain: Elongation factor P (187 aa).

It belongs to the elongation factor P family.

It is found in the cytoplasm. Its pathway is protein biosynthesis; polypeptide chain elongation. Functionally, involved in peptide bond synthesis. Stimulates efficient translation and peptide-bond synthesis on native or reconstituted 70S ribosomes in vitro. Probably functions indirectly by altering the affinity of the ribosome for aminoacyl-tRNA, thus increasing their reactivity as acceptors for peptidyl transferase. The protein is Elongation factor P of Parafrankia sp. (strain EAN1pec).